The following is a 1251-amino-acid chain: Probable transcription factor TDA9 (1251 aa).

C2H2-type zinc fingers lie at residues phenylalanine 61–histidine 83 and phenylalanine 89–histidine 112. Disordered stretches follow at residues valine 160 to arginine 227 and asparagine 398 to serine 428. Over residues lysine 164–lysine 173 the composition is skewed to basic residues. A compositionally biased stretch (polar residues) spans tyrosine 183–proline 202. Residues asparagine 407–serine 428 are compositionally biased toward low complexity. Serine 527 and serine 603 each carry phosphoserine. Positions serine 617 to glycine 634 are enriched in low complexity. Positions serine 617–threonine 636 are disordered.

Belongs to the RSF2/TDA9 family.

Its subcellular location is the nucleus. DNA-binding protein that acts probably as a transcription factor. The polypeptide is Probable transcription factor TDA9 (TDA9) (Saccharomyces cerevisiae (strain ATCC 204508 / S288c) (Baker's yeast)).